The sequence spans 229 residues: RNA pyrophosphohydrolase (229 aa).

A Nudix hydrolase domain is found at 6–149 (GFRPNVGIIL…KRGVYEMALT (144 aa)). The Nudix box signature appears at 38–59 (GGIDRGETPEQAMFRELHEEVG). The segment at 191-229 (KPGMELPPGASFDPDPQNSVPAPLEALPTLPVPKKPLDA) is disordered. Residues 220–229 (LPVPKKPLDA) are compositionally biased toward pro residues.

The protein belongs to the Nudix hydrolase family. RppH subfamily. A divalent metal cation is required as a cofactor.

In terms of biological role, accelerates the degradation of transcripts by removing pyrophosphate from the 5'-end of triphosphorylated RNA, leading to a more labile monophosphorylated state that can stimulate subsequent ribonuclease cleavage. The polypeptide is RNA pyrophosphohydrolase (Acidovorax ebreus (strain TPSY) (Diaphorobacter sp. (strain TPSY))).